The sequence spans 596 residues: Fructan 1-exohydrolase (596 aa).

An N-terminal signal peptide occupies residues 1–20 (MAQAWAFLLPVLVLGSYVTS). Residue Asp-75 is part of the active site. N-linked (GlcNAc...) asparagine glycosylation is found at Asn-168, Asn-236, and Asn-248. Cys-446 and Cys-492 form a disulfide bridge. An N-linked (GlcNAc...) asparagine glycan is attached at Asn-567.

The protein belongs to the glycosyl hydrolase 32 family.

The catalysed reaction is Hydrolysis of terminal, non-reducing (2-&gt;1)-linked beta-D-fructofuranose residues in fructans.. Inhibited by sucrose. Its function is as follows. Hydrolyzes inulin-type beta-(2,1)-fructans. May play a role as a beta-(2,1)-trimmer during graminan biosynthesis. The polypeptide is Fructan 1-exohydrolase (Aegilops tauschii (Tausch's goatgrass)).